The chain runs to 341 residues: Biotin synthase (341 aa).

The Radical SAM core domain maps to 43 to 266 (SEIQLSQLLS…IAVARIVCPK (224 aa)). Residues Cys58, Cys62, and Cys65 each contribute to the [4Fe-4S] cluster site. [2Fe-2S] cluster is bound by residues Cys102, Cys133, Cys193, and Arg270.

The protein belongs to the radical SAM superfamily. Biotin synthase family. As to quaternary structure, homodimer. [4Fe-4S] cluster serves as cofactor. Requires [2Fe-2S] cluster as cofactor.

The catalysed reaction is (4R,5S)-dethiobiotin + (sulfur carrier)-SH + 2 reduced [2Fe-2S]-[ferredoxin] + 2 S-adenosyl-L-methionine = (sulfur carrier)-H + biotin + 2 5'-deoxyadenosine + 2 L-methionine + 2 oxidized [2Fe-2S]-[ferredoxin]. It functions in the pathway cofactor biosynthesis; biotin biosynthesis; biotin from 7,8-diaminononanoate: step 2/2. Catalyzes the conversion of dethiobiotin (DTB) to biotin by the insertion of a sulfur atom into dethiobiotin via a radical-based mechanism. The protein is Biotin synthase of Caulobacter vibrioides (strain ATCC 19089 / CIP 103742 / CB 15) (Caulobacter crescentus).